Consider the following 282-residue polypeptide: NH(3)-dependent NAD(+) synthetase (282 aa).

ATP is bound at residue Gly51–Ser58. Position 57 (Asp57) interacts with Mg(2+). Arg148 provides a ligand contact to deamido-NAD(+). Residue Thr168 participates in ATP binding. Glu173 is a binding site for Mg(2+). Residues Lys181 and Asp188 each contribute to the deamido-NAD(+) site. Positions 197 and 219 each coordinate ATP. His268–Lys269 contributes to the deamido-NAD(+) binding site.

It belongs to the NAD synthetase family. As to quaternary structure, homodimer.

The catalysed reaction is deamido-NAD(+) + NH4(+) + ATP = AMP + diphosphate + NAD(+) + H(+). It participates in cofactor biosynthesis; NAD(+) biosynthesis; NAD(+) from deamido-NAD(+) (ammonia route): step 1/1. Functionally, catalyzes the ATP-dependent amidation of deamido-NAD to form NAD. Uses ammonia as a nitrogen source. The sequence is that of NH(3)-dependent NAD(+) synthetase from Burkholderia lata (strain ATCC 17760 / DSM 23089 / LMG 22485 / NCIMB 9086 / R18194 / 383).